The chain runs to 244 residues: Carboxy-S-adenosyl-L-methionine synthase (244 aa).

Residues tyrosine 41, 66 to 68, 91 to 92, 119 to 120, asparagine 134, and arginine 201 contribute to the S-adenosyl-L-methionine site; these read GCS, DN, and DI.

It belongs to the class I-like SAM-binding methyltransferase superfamily. Cx-SAM synthase family. As to quaternary structure, homodimer.

It carries out the reaction prephenate + S-adenosyl-L-methionine = carboxy-S-adenosyl-L-methionine + 3-phenylpyruvate + H2O. Its function is as follows. Catalyzes the conversion of S-adenosyl-L-methionine (SAM) to carboxy-S-adenosyl-L-methionine (Cx-SAM). The sequence is that of Carboxy-S-adenosyl-L-methionine synthase from Photobacterium profundum (strain SS9).